The following is a 114-amino-acid chain: uncharacterized protein (114 aa).

It is found in the mitochondrion. This is an uncharacterized protein from Arabidopsis thaliana (Mouse-ear cress).